The primary structure comprises 148 residues: Large ribosomal subunit protein uL13 (148 aa).

Belongs to the universal ribosomal protein uL13 family. In terms of assembly, part of the 50S ribosomal subunit.

This protein is one of the early assembly proteins of the 50S ribosomal subunit, although it is not seen to bind rRNA by itself. It is important during the early stages of 50S assembly. This Oenococcus oeni (strain ATCC BAA-331 / PSU-1) protein is Large ribosomal subunit protein uL13.